The sequence spans 567 residues: Probable transport protein (567 aa).

Residues 1-30 (MSDRVEVNERRSDSVSEKEPARDDARKDVT) are compositionally biased toward basic and acidic residues. The interval 1–38 (MSDRVEVNERRSDSVSEKEPARDDARKDVTDDQEDAPP) is disordered. Topologically, residues 1–46 (MSDRVEVNERRSDSVSEKEPARDDARKDVTDDQEDAPPFMTANNAR) are cytoplasmic. Residues 47-67 (VMLVQAIGGSLNGYSIGFVGV) traverse the membrane as a helical segment. The Extracellular portion of the chain corresponds to 68-160 (YSTLFGYSTN…PSGYSSSESG (93 aa)). A helical membrane pass occupies residues 161–181 (IFAGSMIAGCLIGSVFAGPLA). The Cytoplasmic portion of the chain corresponds to 182–189 (SKIGARLS). Residues 190 to 210 (FLLVGLVGVVASVMYHASCAA) form a helical membrane-spanning segment. The Extracellular portion of the chain corresponds to 211-212 (DE). Residues 213 to 233 (FWVLIVGRFVIGLFLGVICVA) form a helical membrane-spanning segment. Residues 234–249 (CPVYTDQNAHPKWKRT) are Cytoplasmic-facing. Residues 250–270 (IGVMFQVFTTLGIFVAALMGL) traverse the membrane as a helical segment. At 271 to 289 (ALGQSIRFDHDGDQKVMAR) the chain is on the extracellular side. A helical membrane pass occupies residues 290–310 (MQGLCVFSTLFSLLTVVLGIV). Residues 311-341 (TRESRAKFDGGEEGRAELNPSEYGYVEMIPR) lie on the Cytoplasmic side of the membrane. A helical membrane pass occupies residues 342 to 362 (LLMGCVMAGTLQLTGINAVMN). Topologically, residues 363–366 (YAPT) are extracellular. Residues 367 to 387 (IMGSLGLAPLVGNFVVMLWNF) form a helical membrane-spanning segment. The Cytoplasmic segment spans residues 388–404 (VTTLASIPLSYVFTMRH). The helical transmembrane segment at 405-425 (VFLFGSIFTSCMCLFMCGIPV) threads the bilayer. The Extracellular segment spans residues 426-437 (YPGVSKKLEAKN). A helical membrane pass occupies residues 438–458 (GVAITGILLFILGFEVCVGPC). Over 459–480 (YYVLTQDMFPPSFRPRGASFTQ) the chain is Cytoplasmic. A helical membrane pass occupies residues 481–501 (VAQFIFNLIINVCYPIATESI). Topologically, residues 502–514 (SGGPSGNQDKGQA) are extracellular. Residues 515–535 (VAFIFFGGLGLICFVIQVFFL) form a helical membrane-spanning segment. The Cytoplasmic segment spans residues 536–567 (HPWDEERDGKKVVAPAIGKKELSEESIGNRAE).

This sequence belongs to the major facilitator superfamily. Sugar transporter (TC 2.A.1.1) family.

The protein localises to the membrane. In terms of biological role, probable membrane transport protein. The protein is Probable transport protein (PRO-1) of Leishmania enriettii.